The sequence spans 438 residues: UDP-N-acetylmuramoylalanine--D-glutamate ligase (438 aa).

ATP is bound at residue 112 to 118 (GSNGKST).

This sequence belongs to the MurCDEF family.

Its subcellular location is the cytoplasm. The catalysed reaction is UDP-N-acetyl-alpha-D-muramoyl-L-alanine + D-glutamate + ATP = UDP-N-acetyl-alpha-D-muramoyl-L-alanyl-D-glutamate + ADP + phosphate + H(+). It functions in the pathway cell wall biogenesis; peptidoglycan biosynthesis. Its function is as follows. Cell wall formation. Catalyzes the addition of glutamate to the nucleotide precursor UDP-N-acetylmuramoyl-L-alanine (UMA). This chain is UDP-N-acetylmuramoylalanine--D-glutamate ligase, found in Salmonella choleraesuis (strain SC-B67).